The sequence spans 1026 residues: Retinoblastoma-related protein 1 (1026 aa).

The domain A stretch occupies residues 416–616; the sequence is TPVSTAMTTA…EKGSSMYNSL (201 aa). Residues 416–872 form a pocket region; it reads TPVSTAMTTA…NEVFIPSVKP (457 aa). Residues 617–737 form a spacer region; the sequence is AVARPALSVE…PGGGGETCAE (121 aa). Residues 656 to 680 are disordered; that stretch reads PVPSLPKPEPMSAQNGDPRSPKRPC. The interval 738 to 872 is domain B; that stretch reads TGISVFFSKI…NEVFIPSVKP (135 aa). The interval 1007-1026 is disordered; sequence QNGSSASSSGAPLKSEQPDS.

It belongs to the retinoblastoma protein (RB) family.

The protein resides in the nucleus. In terms of biological role, regulator of biological processes that recruits a histone deacetylase to control gene transcription. May play a role in the entry into mitosis, negatively regulating the cell proliferation. Formation of stable complexes with geminiviridae replication-associated proteins may create a cellular environment which favors viral DNA replication. This is Retinoblastoma-related protein 1 (RBR1) from Pisum sativum (Garden pea).